Consider the following 333-residue polypeptide: 4-hydroxy-3-methylbut-2-enyl diphosphate reductase (333 aa).

Cys-20 provides a ligand contact to [4Fe-4S] cluster. Positions 49 and 85 each coordinate (2E)-4-hydroxy-3-methylbut-2-enyl diphosphate. Dimethylallyl diphosphate-binding residues include His-49 and His-85. Isopentenyl diphosphate-binding residues include His-49 and His-85. A [4Fe-4S] cluster-binding site is contributed by Cys-107. His-135 is a binding site for (2E)-4-hydroxy-3-methylbut-2-enyl diphosphate. His-135 is a binding site for dimethylallyl diphosphate. His-135 provides a ligand contact to isopentenyl diphosphate. Catalysis depends on Glu-137, which acts as the Proton donor. Thr-176 contacts (2E)-4-hydroxy-3-methylbut-2-enyl diphosphate. Cys-206 is a binding site for [4Fe-4S] cluster. Positions 234, 235, 236, and 279 each coordinate (2E)-4-hydroxy-3-methylbut-2-enyl diphosphate. 4 residues coordinate dimethylallyl diphosphate: Ser-234, Ser-235, Asn-236, and Ser-279. Ser-234, Ser-235, Asn-236, and Ser-279 together coordinate isopentenyl diphosphate.

The protein belongs to the IspH family. [4Fe-4S] cluster serves as cofactor.

The catalysed reaction is isopentenyl diphosphate + 2 oxidized [2Fe-2S]-[ferredoxin] + H2O = (2E)-4-hydroxy-3-methylbut-2-enyl diphosphate + 2 reduced [2Fe-2S]-[ferredoxin] + 2 H(+). It catalyses the reaction dimethylallyl diphosphate + 2 oxidized [2Fe-2S]-[ferredoxin] + H2O = (2E)-4-hydroxy-3-methylbut-2-enyl diphosphate + 2 reduced [2Fe-2S]-[ferredoxin] + 2 H(+). It participates in isoprenoid biosynthesis; dimethylallyl diphosphate biosynthesis; dimethylallyl diphosphate from (2E)-4-hydroxy-3-methylbutenyl diphosphate: step 1/1. Its pathway is isoprenoid biosynthesis; isopentenyl diphosphate biosynthesis via DXP pathway; isopentenyl diphosphate from 1-deoxy-D-xylulose 5-phosphate: step 6/6. Catalyzes the conversion of 1-hydroxy-2-methyl-2-(E)-butenyl 4-diphosphate (HMBPP) into a mixture of isopentenyl diphosphate (IPP) and dimethylallyl diphosphate (DMAPP). Acts in the terminal step of the DOXP/MEP pathway for isoprenoid precursor biosynthesis. The sequence is that of 4-hydroxy-3-methylbut-2-enyl diphosphate reductase from Rhizobium etli (strain CIAT 652).